A 1374-amino-acid polypeptide reads, in one-letter code: DNA-directed RNA polymerase subunit beta (1374 aa).

Belongs to the RNA polymerase beta chain family. The RNAP catalytic core consists of 2 alpha, 1 beta, 1 beta' and 1 omega subunit. When a sigma factor is associated with the core the holoenzyme is formed, which can initiate transcription.

It carries out the reaction RNA(n) + a ribonucleoside 5'-triphosphate = RNA(n+1) + diphosphate. Functionally, DNA-dependent RNA polymerase catalyzes the transcription of DNA into RNA using the four ribonucleoside triphosphates as substrates. The chain is DNA-directed RNA polymerase subunit beta from Rickettsia prowazekii (strain Madrid E).